The sequence spans 437 residues: MAGGPPKALPSTGPQSLRDMPHPLAGSSSEEAVGGDSTPSPDLLMARSFGDKDLILPNGGTPAGTASPASSSSLLNRLQLDDDIDGEARDLFVTVDDPKKHVCTMETYITYRITTKSTRVEFDLPEYSVRRRYQDFDWLRNKLEESQPTHLIPPLPEKFVVKGVVDRFSEEFVETRRKALDKFLKRITDHPVLSFNEHFNVFLTAKDLNAYKKQGIALLSRVGESVKHVTGGYKLRSRPLEFAAISDYLDTFALKLGTIDRIAQRIIKEEIEYLVELREYGPVYSTWSALEGELAEPLEGVSACIGNCSTALEELTDDITEEFLPVLREYVLYSDSMKGVLKKRDQVQAEYEAKLEAVALRKEERPKVPADVEKCQDRMECFNADLKADMERWQSNKRHDFRQLLVGLADKNIQYYEKCLMAWESIIPLLQEKQETK.

The segment at 1–45 (MAGGPPKALPSTGPQSLRDMPHPLAGSSSEEAVGGDSTPSPDLLM) is disordered. Thr-38 bears the Phosphothreonine mark. Phosphoserine is present on Ser-40. The region spanning 89–210 (RDLFVTVDDP…VFLTAKDLNA (122 aa)) is the PX domain. A 1,2-diacyl-sn-glycero-3-phospho-(1D-myo-inositol-3-phosphate) is bound by residues Arg-132, Gln-134, Lys-162, and Arg-176. One can recognise a BAR domain in the interval 234 to 437 (KLRSRPLEFA…PLLQEKQETK (204 aa)).

It belongs to the sorting nexin family. In terms of assembly, heterodimer; heterodimerizes with SNX4.

The protein resides in the early endosome membrane. Its function is as follows. Involved in the regulation of endocytosis and in several stages of intracellular trafficking. Together with SNX4, involved in autophagosome assembly. The protein is Sorting nexin-30 of Mus musculus (Mouse).